Reading from the N-terminus, the 77-residue chain is Conotoxin PnMKLT1-0122 (77 aa).

A signal peptide spans 1-22 (MKLTCMMIVAVLFLTAWTFATA). The propeptide occupies 23–49 (EDPRNGLENLFSKAHHEMKNPEDSKLN). Cystine bridges form between C52–C67, C59–C71, and C66–C76.

It belongs to the conotoxin O1 superfamily. Expressed by the venom duct.

It is found in the secreted. The sequence is that of Conotoxin PnMKLT1-0122 from Conus pennaceus (Feathered cone).